Reading from the N-terminus, the 221-residue chain is LHFPL tetraspan subfamily member 5 protein (221 aa).

Topologically, residues 1–24 (MPKLLPAQEAARIYHTNYVRNARA) are cytoplasmic. Residues 25–45 (MGVLWALFTLCFSILMVVTFI) form a helical membrane-spanning segment. Over 46–98 (QPYWIGDSIDTPQAGYFGLFSYCIGNALTGELICKGSPLDFGTIPSSAFKTAM) the chain is Extracellular. A helical membrane pass occupies residues 99-119 (FFVGISTFLIIGSILCFSLFF). At 120–128 (FCNAATVYK) the chain is on the cytoplasmic side. Residues 129-149 (VCAWMQLAAATGLMIGCLIYP) form a helical membrane-spanning segment. The Extracellular segment spans residues 150 to 179 (DGWDSSEVKRMCGDKTDKYTLGACTVRWAY). Residues 180 to 200 (ILCIIGILDALILSFLAFVLG) form a helical membrane-spanning segment. The Cytoplasmic portion of the chain corresponds to 201–221 (NRQDNLLPSDFKVESKEEGNE).

Belongs to the LHFP family.

It is found in the cell membrane. Probable component of the mechanotransducer (MET) non-specific cation channel complex. In Gallus gallus (Chicken), this protein is LHFPL tetraspan subfamily member 5 protein.